Reading from the N-terminus, the 368-residue chain is 4-hydroxy-3-methylbut-2-en-1-yl diphosphate synthase (flavodoxin) (368 aa).

Residues Cys-268, Cys-271, Cys-303, and Glu-310 each contribute to the [4Fe-4S] cluster site.

Belongs to the IspG family. The cofactor is [4Fe-4S] cluster.

The enzyme catalyses (2E)-4-hydroxy-3-methylbut-2-enyl diphosphate + oxidized [flavodoxin] + H2O + 2 H(+) = 2-C-methyl-D-erythritol 2,4-cyclic diphosphate + reduced [flavodoxin]. Its pathway is isoprenoid biosynthesis; isopentenyl diphosphate biosynthesis via DXP pathway; isopentenyl diphosphate from 1-deoxy-D-xylulose 5-phosphate: step 5/6. Its function is as follows. Converts 2C-methyl-D-erythritol 2,4-cyclodiphosphate (ME-2,4cPP) into 1-hydroxy-2-methyl-2-(E)-butenyl 4-diphosphate. This Listeria monocytogenes serotype 4b (strain CLIP80459) protein is 4-hydroxy-3-methylbut-2-en-1-yl diphosphate synthase (flavodoxin).